The primary structure comprises 392 residues: Alpha-(1,3)-fucosyltransferase fut-6 (392 aa).

At 1-12 (MSQIGGATCTWR) the chain is on the cytoplasmic side. Residues 13-35 (YLGRFVTLGIYASVALFVWYTLV) form a helical; Signal-anchor for type II membrane protein membrane-spanning segment. The Lumenal segment spans residues 36–392 (PTRSKHKDSI…CNNQIASKYL (357 aa)). N-linked (GlcNAc...) asparagine glycosylation occurs at asparagine 158.

The protein belongs to the glycosyltransferase 10 family. Unlike other alpha-(1,3)-fucosyltransferases, appears not to require a divalent metal cation as cofactor. is required as a cofactor.

It is found in the golgi apparatus. Its subcellular location is the golgi stack membrane. It participates in protein modification; protein glycosylation. Inhibited by divalent metal cations. Functionally, involved in the fucosylation of N-glycans. Preferentially catalyzes the addition of fucose in alpha 1-3 linkage to the distal GlcNAc residue in N-glycans. Catalyzes the transfer of fucose to Gal-beta-1-4-GlcNAc-alpha-pNP (LN-pNP) and Gal-beta-1-4-GlcNAc-beta-1-3-Gal-beta-1-4-Glc (LNnT). Unlike alpha-(1,3)-fucosyltransferase fut-1, does not transfer fucose to Man-alpha-1-3-(Man-alpha-1-6)-Man-beta-1-4-GlcNAc-beta-1-4-GlcNAc-beta-1-Asn (M3), Man-alpha-1-3-(Man-alpha-1-6)-Man-beta-1-4-GlcNAc-beta-1-4-(Fuc-alpha-1-6)-GlcNAc-beta-1-Asn (M3F6) and GlcNAc-beta-1-2-Man-alpha-1-3-(GlcNAc-beta-1-2-Man-alpha-1-6)-Man-beta-1-4-GlcNAc-beta-1-4(Fuc-alpha-1-6)-GlcNAc-beta-1-Asn (GnM3F6). This Caenorhabditis elegans protein is Alpha-(1,3)-fucosyltransferase fut-6.